We begin with the raw amino-acid sequence, 859 residues long: Cadherin-related family member 1 (859 aa).

The first 21 residues, 1–21 (MRRGPRVALVLGLLRIYLAQA), serve as a signal peptide directing secretion. At 22 to 701 (NFAPHFFDNG…LIQTKDNPMK (680 aa)) the chain is on the extracellular side. Cadherin domains follow at residues 36-135 (NGNM…APRF), 136-247 (IQEP…APIF), 248-354 (VGTP…PPTF), 360-473 (PQNK…VPKF), 474-577 (TSHY…YPQF), and 569-691 (DVND…MAAF). Asn-58 and Asn-89 each carry an N-linked (GlcNAc...) asparagine glycan. Asn-288 is a glycosylation site (N-linked (GlcNAc...) asparagine). A helical transmembrane segment spans residues 702–722 (AVGVLAGVMAIVVAITVLIST). The Cytoplasmic portion of the chain corresponds to 723–859 (ATFWRNKKSN…KKSLDNKAYI (137 aa)). Residues 793-838 (PALPPPPKMASSMVAQQTVPTVSGSLTPQPSPQLPTPKTLGGPVQS) form a disordered region. Polar residues predominate over residues 805–816 (MVAQQTVPTVSG).

As to quaternary structure, interacts with PROM1. Undergoes proteolytic cleavage; produces a soluble 95 kDa N-terminal fragment and a 25 kDa cell-associated C-terminal fragment. As to expression, expressed in cone and rod photoreceptor cells (at protein level). Expressed in photoreceptor cells of the outer nuclear layer of the retina. Expressed in mitral and tufted cells in the olfactory bulb.

Its subcellular location is the cell membrane. Its function is as follows. Potential calcium-dependent cell-adhesion protein. May be required for the structural integrity of the outer segment (OS) of photoreceptor cells. The sequence is that of Cadherin-related family member 1 (Cdhr1) from Mus musculus (Mouse).